A 639-amino-acid polypeptide reads, in one-letter code: 3D-(3,5/4)-trihydroxycyclohexane-1,2-dione hydrolase (639 aa).

Residue E62 participates in thiamine diphosphate binding. The tract at residues 438 to 518 (SLPGDLQRMW…INILLFDNCG (81 aa)) is thiamine pyrophosphate binding. Residues D489 and N516 each contribute to the Mg(2+) site.

The protein belongs to the TPP enzyme family. It depends on Mg(2+) as a cofactor. Thiamine diphosphate is required as a cofactor.

It catalyses the reaction 3D-3,5/4-trihydroxycyclohexane-1,2-dione + H2O = 5-deoxy-D-glucuronate + H(+). Its pathway is polyol metabolism; myo-inositol degradation into acetyl-CoA; acetyl-CoA from myo-inositol: step 3/7. Its function is as follows. Involved in the cleavage of the C1-C2 bond of 3D-(3,5/4)-trihydroxycyclohexane-1,2-dione (THcHDO) to yield 5-deoxy-glucuronate (5DG). The protein is 3D-(3,5/4)-trihydroxycyclohexane-1,2-dione hydrolase of Clostridium perfringens (strain 13 / Type A).